A 167-amino-acid polypeptide reads, in one-letter code: Cytochrome c-type biogenesis protein CcmE (167 aa).

At 1–7 (MTRKQRR) the chain is on the cytoplasmic side. The helical; Signal-anchor for type II membrane protein transmembrane segment at 8-28 (LLMIGGAGVVLIVAVGLVLNA) threads the bilayer. The Periplasmic segment spans residues 29 to 167 (LRDSIVFFST…TSANAAEGGK (139 aa)). Heme is bound by residues histidine 122 and tyrosine 126. Positions 137–150 (KDGHWKDDYGKKSP) are enriched in basic and acidic residues. The segment at 137 to 167 (KDGHWKDDYGKKSPGETTAGQTSANAAEGGK) is disordered. The span at 151–161 (GETTAGQTSAN) shows a compositional bias: polar residues.

This sequence belongs to the CcmE/CycJ family.

The protein resides in the cell inner membrane. Heme chaperone required for the biogenesis of c-type cytochromes. Transiently binds heme delivered by CcmC and transfers the heme to apo-cytochromes in a process facilitated by CcmF and CcmH. The polypeptide is Cytochrome c-type biogenesis protein CcmE (Rhodopseudomonas palustris (strain ATCC BAA-98 / CGA009)).